The sequence spans 569 residues: Glucose-6-phosphate isomerase, cytosolic 1A (569 aa).

Glu360 acts as the Proton donor in catalysis. Residues His391 and Lys516 contribute to the active site.

Belongs to the GPI family. Homodimer.

It is found in the cytoplasm. The catalysed reaction is alpha-D-glucose 6-phosphate = beta-D-fructose 6-phosphate. The protein operates within carbohydrate degradation; glycolysis; D-glyceraldehyde 3-phosphate and glycerone phosphate from D-glucose: step 2/4. In Clarkia lewisii (Farewell-to-spring), this protein is Glucose-6-phosphate isomerase, cytosolic 1A (PGIC1-A).